A 142-amino-acid chain; its full sequence is Peptide methionine sulfoxide reductase MsrB (142 aa).

A MsrB domain is found at 10 to 132 (EEEWKKVLTP…NSVSLNFKTE (123 aa)). 4 residues coordinate Zn(2+): Cys49, Cys52, Cys98, and Cys101. Cys121 serves as the catalytic Nucleophile.

Belongs to the MsrB Met sulfoxide reductase family. Zn(2+) is required as a cofactor.

It catalyses the reaction L-methionyl-[protein] + [thioredoxin]-disulfide + H2O = L-methionyl-(R)-S-oxide-[protein] + [thioredoxin]-dithiol. In Methanosarcina barkeri (strain Fusaro / DSM 804), this protein is Peptide methionine sulfoxide reductase MsrB.